A 1620-amino-acid chain; its full sequence is Probable serine/threonine-protein kinase gdt4 (1620 aa).

The signal sequence occupies residues M1–S19. Topologically, residues N20–N891 are extracellular. Residues I892–G912 traverse the membrane as a helical segment. The Cytoplasmic portion of the chain corresponds to Y913–Q1620. The Protein kinase domain occupies I1349 to L1604. ATP is bound by residues L1355–V1363 and K1376. D1466 serves as the catalytic Proton acceptor.

The protein in the N-terminal section; belongs to the GDT family. It in the C-terminal section; belongs to the protein kinase superfamily. TKL Ser/Thr protein kinase family.

It is found in the membrane. It catalyses the reaction L-seryl-[protein] + ATP = O-phospho-L-seryl-[protein] + ADP + H(+). The enzyme catalyses L-threonyl-[protein] + ATP = O-phospho-L-threonyl-[protein] + ADP + H(+). This Dictyostelium discoideum (Social amoeba) protein is Probable serine/threonine-protein kinase gdt4 (gdt4).